A 367-amino-acid chain; its full sequence is Chorismate synthase (367 aa).

Positions 39-60 (EEFSHDLQRRASGKSRHTSARR) are disordered. Arg48 and Arg54 together coordinate NADP(+). FMN contacts are provided by residues 125–127 (RSS), 238–239 (NA), Gly278, 293–297 (KPTSS), and Arg319.

Belongs to the chorismate synthase family. Homotetramer. FMNH2 is required as a cofactor.

It carries out the reaction 5-O-(1-carboxyvinyl)-3-phosphoshikimate = chorismate + phosphate. It functions in the pathway metabolic intermediate biosynthesis; chorismate biosynthesis; chorismate from D-erythrose 4-phosphate and phosphoenolpyruvate: step 7/7. Functionally, catalyzes the anti-1,4-elimination of the C-3 phosphate and the C-6 proR hydrogen from 5-enolpyruvylshikimate-3-phosphate (EPSP) to yield chorismate, which is the branch point compound that serves as the starting substrate for the three terminal pathways of aromatic amino acid biosynthesis. This reaction introduces a second double bond into the aromatic ring system. The polypeptide is Chorismate synthase (Xanthomonas oryzae pv. oryzae (strain MAFF 311018)).